We begin with the raw amino-acid sequence, 490 residues long: Betaine aldehyde dehydrogenase (490 aa).

The K(+) site is built by threonine 26, isoleucine 27, and aspartate 93. 150–152 (GAW) lines the NAD(+) pocket. Lysine 162 functions as the Charge relay system in the catalytic mechanism. 176–179 (KPSE) contributes to the NAD(+) binding site. Valine 180 is a binding site for K(+). 230–233 (GVAS) contributes to the NAD(+) binding site. Residue leucine 246 participates in K(+) binding. Catalysis depends on glutamate 252, which acts as the Proton acceptor. NAD(+)-binding residues include glycine 254, cysteine 286, and glutamate 387. The Nucleophile role is filled by cysteine 286. Cysteine 286 carries the cysteine sulfenic acid (-SOH) modification. 2 residues coordinate K(+): lysine 457 and glycine 460. The Charge relay system role is filled by glutamate 464.

It belongs to the aldehyde dehydrogenase family. In terms of assembly, dimer of dimers. The cofactor is K(+).

The enzyme catalyses betaine aldehyde + NAD(+) + H2O = glycine betaine + NADH + 2 H(+). Its pathway is amine and polyamine biosynthesis; betaine biosynthesis via choline pathway; betaine from betaine aldehyde: step 1/1. Involved in the biosynthesis of the osmoprotectant glycine betaine. Catalyzes the irreversible oxidation of betaine aldehyde to the corresponding acid. The polypeptide is Betaine aldehyde dehydrogenase (Escherichia coli O157:H7).